Here is a 406-residue protein sequence, read N- to C-terminus: DNA primase DnaG (406 aa).

The Toprim domain maps to 169–247 (PNLIIVEGRA…KIDFVARAPI (79 aa)). Residues Glu175, Asp220, and Asp222 each contribute to the Mg(2+) site.

It belongs to the archaeal DnaG primase family. In terms of assembly, forms a ternary complex with MCM helicase and DNA. Component of the archaeal exosome complex. Interacts with Csl4 but not with Rrp4. Requires Mg(2+) as cofactor.

The enzyme catalyses ssDNA + n NTP = ssDNA/pppN(pN)n-1 hybrid + (n-1) diphosphate.. In terms of biological role, RNA polymerase that catalyzes the synthesis of short RNA molecules used as primers for DNA polymerase during DNA replication. Can use NTPs but not dNTPs. Binds DNA. Also part of the exosome, which is a complex involved in RNA degradation. Acts as a poly(A)-binding protein that enhances the interaction between heteromeric, adenine-rich transcripts and the exosome. This Saccharolobus solfataricus (strain ATCC 35092 / DSM 1617 / JCM 11322 / P2) (Sulfolobus solfataricus) protein is DNA primase DnaG.